Here is a 130-residue protein sequence, read N- to C-terminus: uncharacterized protein (130 aa).

Residues 1 to 20 (MFNCLTKLVILVCLKYVAKA) form the signal peptide.

This is an uncharacterized protein from Saccharomyces cerevisiae (strain ATCC 204508 / S288c) (Baker's yeast).